A 261-amino-acid polypeptide reads, in one-letter code: Ice-binding protein (261 aa).

The signal sequence occupies residues 1 to 20 (MSLLSIITIGLAGLGGLVNG). The N-linked (GlcNAc...) asparagine glycan is linked to Asn185.

The protein belongs to the ice-binding protein family. In terms of assembly, homodimer. Dimerization is not required for the thermal hysteresis (TH) activity. In terms of processing, glycosylated. Glycosylation is not required for the thermal hysteresis (TH) activity. Glycosylation may increase stability and secretion of this protein.

It is found in the secreted. Functionally, confers freeze tolerance. Binds to the surface of ice crystals and inhibits their growth. Has low thermal hysteresis (TH) activity, which is the ability to lower the freezing point of an aqueous solution below its melting point. The TH activity of this protein is approximately 0.2 degrees Celsius at 50 uM and 0.3 degrees Celsius at 400 uM. The polypeptide is Ice-binding protein (Leucosporidium sp. (strain AY30) (Arctic yeast)).